The chain runs to 322 residues: TATA box-binding protein-like 2 (322 aa).

The segment at 31–54 (PALSSTQDSTYLSGRAGPSRESGA) is disordered. Over residues 32-42 (ALSSTQDSTYL) the composition is skewed to polar residues.

It belongs to the TBP family.

It localises to the nucleus. TATA box-binding transcription factor. Members of the TBP family are differentially required to regulate transcription and development during early embryogenesis. This Takifugu rubripes (Japanese pufferfish) protein is TATA box-binding protein-like 2.